A 486-amino-acid chain; its full sequence is ATP synthase subunit beta (486 aa).

164-171 is a binding site for ATP; that stretch reads GGAGVGKT.

It belongs to the ATPase alpha/beta chains family. As to quaternary structure, F-type ATPases have 2 components, CF(1) - the catalytic core - and CF(0) - the membrane proton channel. CF(1) has five subunits: alpha(3), beta(3), gamma(1), delta(1), epsilon(1). CF(0) has four main subunits: a(1), b(1), b'(1) and c(9-12).

The protein localises to the cellular thylakoid membrane. It carries out the reaction ATP + H2O + 4 H(+)(in) = ADP + phosphate + 5 H(+)(out). In terms of biological role, produces ATP from ADP in the presence of a proton gradient across the membrane. The catalytic sites are hosted primarily by the beta subunits. The polypeptide is ATP synthase subunit beta (Prochlorococcus marinus (strain AS9601)).